The primary structure comprises 409 residues: Accessory Sec system protein translocase subunit SecY2 (409 aa).

Helical transmembrane passes span 16–36, 61–81, 104–124, 132–152, 161–181, 190–210, 242–262, 286–306, 341–361, and 374–394; these read ILITFSLIIIFLLGRYVPIPG, LSQVGVFSLGIGPMMTTMILL, VVMLVIAIIQGLAIAISFQYH, LLLATMILVTGAYIISWIGNL, MTILVVVGMLVGQFNNIPLIF, LAIILFLLWTLVAMYLMITFE, GMAFMYVYTLLMFPQYIIILL, GVVIYMILMLVLSVAFTFVNI, LFGTFSGFFMAFLGGVPLLFA, and TGIFMMITGMSFMILDEFQVI.

Belongs to the SecY/SEC61-alpha family. SecY2 subfamily. In terms of assembly, component of the accessory SecA2/SecY2 protein translocase complex required to export cell wall proteins. May form heterotrimers with SecE and SecG subunits.

It localises to the cell membrane. Part of the accessory SecA2/SecY2 system specifically required for export of possible cell wall proteins. The central subunit of a protein translocation channel. This is Accessory Sec system protein translocase subunit SecY2 from Streptococcus agalactiae serotype Ia (strain ATCC 27591 / A909 / CDC SS700).